Consider the following 126-residue polypeptide: Large ribosomal subunit protein eL18 (126 aa).

The protein belongs to the eukaryotic ribosomal protein eL18 family.

The chain is Large ribosomal subunit protein eL18 from Methanosarcina acetivorans (strain ATCC 35395 / DSM 2834 / JCM 12185 / C2A).